Here is a 141-residue protein sequence, read N- to C-terminus: Large ribosomal subunit protein uL13 (141 aa).

It belongs to the universal ribosomal protein uL13 family. Part of the 50S ribosomal subunit.

In terms of biological role, this protein is one of the early assembly proteins of the 50S ribosomal subunit, although it is not seen to bind rRNA by itself. It is important during the early stages of 50S assembly. This Helicobacter pylori (strain G27) protein is Large ribosomal subunit protein uL13.